Here is a 75-residue protein sequence, read N- to C-terminus: Conotoxin Leo-O3 (75 aa).

An N-terminal signal peptide occupies residues methionine 1–alanine 22. The propeptide occupies aspartate 23–arginine 42. Cystine bridges form between cysteine 47/cysteine 60, cysteine 54/cysteine 63, and cysteine 59/cysteine 69. The residue at position 69 (cysteine 69) is a Cysteine amide. A propeptide spanning residues glycine 70–valine 75 is cleaved from the precursor.

It belongs to the conotoxin O1 superfamily. In terms of tissue distribution, expressed by the venom duct.

It is found in the secreted. The sequence is that of Conotoxin Leo-O3 from Conus leopardus (Leopard cone).